The sequence spans 138 residues: PTS system sorbose-specific EIIA component (138 aa).

In terms of domain architecture, PTS EIIA type-4 spans M1–L125. The active-site Tele-phosphohistidine intermediate is H8. H8 carries the post-translational modification Phosphohistidine; by HPr.

The protein resides in the cytoplasm. Its function is as follows. The phosphoenolpyruvate-dependent sugar phosphotransferase system (PTS), a major carbohydrate active transport system, catalyzes the phosphorylation of incoming sugar substrates concomitant with their translocation across the cell membrane. The enzyme II SorABCD PTS system is involved in L-sorbose transport. This is PTS system sorbose-specific EIIA component from Lacticaseibacillus casei (Lactobacillus casei).